Reading from the N-terminus, the 352-residue chain is tRNA-specific 2-thiouridylase MnmA (352 aa).

Residues 6–13 (AMSGGVDS) and Leu32 each bind ATP. Cys101 acts as the Nucleophile in catalysis. Cys101 and Cys194 form a disulfide bridge. Gly125 contacts ATP. An interaction with tRNA region spans residues 144-146 (KDQ). Cys194 functions as the Cysteine persulfide intermediate in the catalytic mechanism.

This sequence belongs to the MnmA/TRMU family.

Its subcellular location is the cytoplasm. The catalysed reaction is S-sulfanyl-L-cysteinyl-[protein] + uridine(34) in tRNA + AH2 + ATP = 2-thiouridine(34) in tRNA + L-cysteinyl-[protein] + A + AMP + diphosphate + H(+). In terms of biological role, catalyzes the 2-thiolation of uridine at the wobble position (U34) of tRNA, leading to the formation of s(2)U34. The sequence is that of tRNA-specific 2-thiouridylase MnmA from Frankia alni (strain DSM 45986 / CECT 9034 / ACN14a).